The primary structure comprises 640 residues: Threonine--tRNA ligase (640 aa).

The 61-residue stretch at 1 to 61 folds into the TGS domain; it reads MPIITLPNGD…TEDSTLQIIT (61 aa). Residues 242–533 are catalytic; that stretch reads DHRKIGKALD…LIEHYAGFMP (292 aa). Residues C333, H384, and H510 each contribute to the Zn(2+) site.

The protein belongs to the class-II aminoacyl-tRNA synthetase family. In terms of assembly, homodimer. Zn(2+) serves as cofactor.

Its subcellular location is the cytoplasm. It carries out the reaction tRNA(Thr) + L-threonine + ATP = L-threonyl-tRNA(Thr) + AMP + diphosphate + H(+). Functionally, catalyzes the attachment of threonine to tRNA(Thr) in a two-step reaction: L-threonine is first activated by ATP to form Thr-AMP and then transferred to the acceptor end of tRNA(Thr). Also edits incorrectly charged L-seryl-tRNA(Thr). The protein is Threonine--tRNA ligase of Acinetobacter baumannii (strain AB0057).